A 162-amino-acid chain; its full sequence is Selenoprotein F (162 aa).

The first 28 residues, 1-28 (MAAEPGGWLGPALGLRLLLATALQMVSA), serve as a signal peptide directing secretion. Residue U93 is a non-standard amino acid, selenocysteine.

The protein belongs to the selenoprotein M/F family. In terms of assembly, forms a tight complex with UGGT1/UGCGL1. Interacts with UGGT2/UGCGL2. Interacts with RDH11.

It is found in the endoplasmic reticulum lumen. Its function is as follows. May be involved in redox reactions associated with the formation of disulfide bonds. May contribute to the quality control of protein folding in the endoplasmic reticulum. May regulate protein folding by enhancing the catalytic activity of UGGT1/UGCGL1 and UGGT2/UGCGL2. The polypeptide is Selenoprotein F (Sus scrofa (Pig)).